We begin with the raw amino-acid sequence, 267 residues long: MNRKKTIIDIQKMKAAGEKITVLTSYDYPFTRVMDECGIDMILIGDSVGVVFSGYDNTLPVTMDEMIYHTRAVVRARPKALVVADMPFLSYQTDLRDARLNAGRLVKDGGAEAVKLEGGSHVADTIRAIVDMDIPVMAHIGLTPQSIHRMGGYKVQGKKEEQSQRLLDDAKAIEEAGAFAVVLEGIPLKLAEKITEELSIPTIGIGAGPHCDGQVLVIHDILGLCEKYSPKFVKRYGDANALITSAVSSYIAEVKKGEFPDEGHSFS.

Mg(2+) contacts are provided by Asp-46 and Asp-85. 3-methyl-2-oxobutanoate contacts are provided by residues 46 to 47, Asp-85, and Lys-115; that span reads DS. Mg(2+) is bound at residue Glu-117. Residue Glu-184 is the Proton acceptor of the active site.

The protein belongs to the PanB family. In terms of assembly, homodecamer; pentamer of dimers. It depends on Mg(2+) as a cofactor.

The protein localises to the cytoplasm. It carries out the reaction 3-methyl-2-oxobutanoate + (6R)-5,10-methylene-5,6,7,8-tetrahydrofolate + H2O = 2-dehydropantoate + (6S)-5,6,7,8-tetrahydrofolate. It participates in cofactor biosynthesis; (R)-pantothenate biosynthesis; (R)-pantoate from 3-methyl-2-oxobutanoate: step 1/2. Catalyzes the reversible reaction in which hydroxymethyl group from 5,10-methylenetetrahydrofolate is transferred onto alpha-ketoisovalerate to form ketopantoate. This is 3-methyl-2-oxobutanoate hydroxymethyltransferase from Geobacter metallireducens (strain ATCC 53774 / DSM 7210 / GS-15).